Here is a 144-residue protein sequence, read N- to C-terminus: Superoxide dismutase [Mn] 1 (144 aa).

Residues histidine 42, aspartate 124, and histidine 128 each contribute to the Mn(2+) site.

Belongs to the iron/manganese superoxide dismutase family. Mn(2+) serves as cofactor.

It catalyses the reaction 2 superoxide + 2 H(+) = H2O2 + O2. Destroys superoxide anion radicals which are normally produced within the cells and which are toxic to biological systems. This chain is Superoxide dismutase [Mn] 1 (sod1), found in Haloferax mediterranei (Halobacterium mediterranei).